Consider the following 141-residue polypeptide: Ly6/PLAUR domain-containing protein 1 (141 aa).

Positions 1 to 20 (MWVLGIAATFCGLFLLPGFA) are cleaved as a signal peptide. 6 cysteine pairs are disulfide-bonded: Cys25/Cys54, Cys28/Cys37, Cys46/Cys71, Cys77/Cys100, Cys88/Cys97, and Cys101/Cys106. Residues 25–107 (CYQCEEFQLN…ISCCNTPLCN (83 aa)) enclose the UPAR/Ly6 domain. N-linked (GlcNAc...) asparagine glycosylation is present at Asn45. Ser117 carries the GPI-anchor amidated serine lipid modification. Residues 118–141 (ASALRPGLRTTILFLKLALFSAHC) constitute a propeptide, removed in mature form.

Interacts with CHRNA4 and nAChRs containing alpha-4:beta-2 (CHRNA4:CHRNB2) and alpha-7 (CHRNA7) subunits.

The protein resides in the cell membrane. Its function is as follows. Believed to act as a modulator of nicotinic acetylcholine receptors (nAChRs) activity. In vitro increases receptor desensitization and decreases affinity for ACh of alpha-4:beta-2-containing nAChRs. May play a role in the intracellular trafficking of alpha-4:beta-2 and alpha-7-containing nAChRs and may inhibit their expression at the cell surface. May be involved in the control of anxiety. In Homo sapiens (Human), this protein is Ly6/PLAUR domain-containing protein 1 (LYPD1).